The following is a 423-amino-acid chain: UDP-N-acetylmuramoylalanine--D-glutamate ligase (423 aa).

Position 112–118 (112–118 (GSVGKST)) interacts with ATP.

This sequence belongs to the MurCDEF family.

It localises to the cytoplasm. It catalyses the reaction UDP-N-acetyl-alpha-D-muramoyl-L-alanine + D-glutamate + ATP = UDP-N-acetyl-alpha-D-muramoyl-L-alanyl-D-glutamate + ADP + phosphate + H(+). Its pathway is cell wall biogenesis; peptidoglycan biosynthesis. Its function is as follows. Cell wall formation. Catalyzes the addition of glutamate to the nucleotide precursor UDP-N-acetylmuramoyl-L-alanine (UMA). This is UDP-N-acetylmuramoylalanine--D-glutamate ligase from Thermosipho africanus (strain TCF52B).